Here is a 294-residue protein sequence, read N- to C-terminus: sn-glycerol-3-phosphate transport system permease protein UgpA (294 aa).

The Cytoplasmic segment spans residues 1–11; the sequence is MSPSRPGFSCS. The helical transmembrane segment at 12–32 threads the bilayer; that stretch reads WLPYLLVLPQLAITAIFFLWP. The Periplasmic portion of the chain corresponds to 33-80; it reads AGEALWYSVQTLDPFGLSSEFVGLSNFIQLFQDEYYLASFYTTLIFSA. Residues 72–284 enclose the ABC transmembrane type-1 domain; the sequence is FYTTLIFSAL…LLVIGLTVIQ (213 aa). Residues 81 to 101 traverse the membrane as a helical segment; it reads LVAGIGLNVSLFLAAMVDYVL. The Cytoplasmic segment spans residues 102–109; the sequence is RGSRLYQT. Residues 110–130 form a helical membrane-spanning segment; the sequence is LLILPYAVAPAVAAVLWIFLF. At 131–157 the chain is on the periplasmic side; the sequence is DPGLGLITHALAKLGYSWNHAQNSGQA. Residues 158–178 traverse the membrane as a helical segment; sequence MFLVVLASVWKQISYNFLFFL. Topologically, residues 179–207 are cytoplasmic; sequence AALQSIPKSLVEAAAIDGAGPVRRFFNLV. A helical transmembrane segment spans residues 208 to 228; sequence LPLISPVSFFLLVVNLVYAFF. At 229–262 the chain is on the periplasmic side; sequence DTFPVIDAATGGGPVQATTTLIYKIYREGFAGLD. The helical transmembrane segment at 263-283 threads the bilayer; sequence LSSSAAQSVILMLLVIGLTVI. The Cytoplasmic portion of the chain corresponds to 284–294; sequence QFRFVERKVRY.

It belongs to the binding-protein-dependent transport system permease family. UgpAE subfamily. The complex is composed of two ATP-binding proteins (UgpC), two transmembrane proteins (UgpA and UgpE) and a solute-binding protein (UgpB).

Its subcellular location is the cell inner membrane. In terms of biological role, part of the ABC transporter complex UgpBAEC involved in sn-glycerol-3-phosphate (G3P) import. Probably responsible for the translocation of the substrate across the membrane. The sequence is that of sn-glycerol-3-phosphate transport system permease protein UgpA (ugpA) from Yersinia pseudotuberculosis serotype I (strain IP32953).